The primary structure comprises 21 residues: 40 kDa major outer membrane protein (21 aa).

As to quaternary structure, disulfide bond interactions within and between MOMP molecules and other components form high molecular-weight oligomers.

The protein resides in the cell outer membrane. Structural rigidity of the outer membrane of elementary bodies and porin forming, permitting diffusion of solutes through the intracellular reticulate body membrane. In Actinobacillus pleuropneumoniae (Haemophilus pleuropneumoniae), this protein is 40 kDa major outer membrane protein.